A 98-amino-acid polypeptide reads, in one-letter code: UPF0235 protein CCNA_03737 (98 aa).

The protein belongs to the UPF0235 family.

The protein is UPF0235 protein CCNA_03737 of Caulobacter vibrioides (strain NA1000 / CB15N) (Caulobacter crescentus).